Consider the following 794-residue polypeptide: Cadherin-12 (794 aa).

The signal sequence occupies residues 1–23; it reads MLTRNCLSLLLWVLFDGGLLTPL. The propeptide occupies 24–54; the sequence is QPQPQQTLATEPRENVIHLPGQRSHFQRVKR. 5 Cadherin domains span residues 55–160, 161–269, 270–384, 385–487, and 488–609; these read GWVW…EPKF, LDGP…PPRF, PKSI…PPVF, SKPL…EFPP, and EISV…IFLP. Residues 55 to 609 lie on the Extracellular side of the membrane; that stretch reads GWVWNQFFVL…SCNVEAIFLP (555 aa). N-linked (GlcNAc...) asparagine glycosylation occurs at Asn-256. Asn-456, Asn-537, and Asn-545 each carry an N-linked (GlcNAc...) asparagine glycan. Residues 610 to 637 traverse the membrane as a helical segment; sequence VGLSTGALIAILLCIVILLAIVVLYVAL. Residues 638–794 lie on the Cytoplasmic side of the membrane; the sequence is RRQKKKDTLM…EESYNPDKVT (157 aa). The residue at position 787 (Ser-787) is a Phosphoserine.

Brain.

The protein resides in the cell membrane. Cadherins are calcium-dependent cell adhesion proteins. They preferentially interact with themselves in a homophilic manner in connecting cells; cadherins may thus contribute to the sorting of heterogeneous cell types. This Homo sapiens (Human) protein is Cadherin-12 (CDH12).